A 161-amino-acid polypeptide reads, in one-letter code: Ribonuclease P protein component 2 (161 aa).

It belongs to the eukaryotic/archaeal RNase P protein component 2 family. Consists of a catalytic RNA component and at least 4-5 protein subunits.

Its subcellular location is the cytoplasm. The catalysed reaction is Endonucleolytic cleavage of RNA, removing 5'-extranucleotides from tRNA precursor.. Functionally, part of ribonuclease P, a protein complex that generates mature tRNA molecules by cleaving their 5'-ends. The chain is Ribonuclease P protein component 2 from Natronomonas pharaonis (strain ATCC 35678 / DSM 2160 / CIP 103997 / JCM 8858 / NBRC 14720 / NCIMB 2260 / Gabara) (Halobacterium pharaonis).